A 38-amino-acid polypeptide reads, in one-letter code: Cytochrome b559 subunit beta (38 aa).

A helical membrane pass occupies residues 13–29 (WLAVHALAVPTVFFLGS). Position 17 (His-17) interacts with heme.

Belongs to the PsbE/PsbF family. As to quaternary structure, heterodimer of an alpha subunit and a beta subunit. PSII is composed of 1 copy each of membrane proteins PsbA, PsbB, PsbC, PsbD, PsbE, PsbF, PsbH, PsbI, PsbJ, PsbK, PsbL, PsbM, PsbT, PsbX, PsbY, PsbZ, Psb30/Ycf12, at least 3 peripheral proteins of the oxygen-evolving complex and a large number of cofactors. It forms dimeric complexes. Heme b is required as a cofactor.

It localises to the plastid. The protein localises to the chloroplast thylakoid membrane. Functionally, this b-type cytochrome is tightly associated with the reaction center of photosystem II (PSII). PSII is a light-driven water:plastoquinone oxidoreductase that uses light energy to abstract electrons from H(2)O, generating O(2) and a proton gradient subsequently used for ATP formation. It consists of a core antenna complex that captures photons, and an electron transfer chain that converts photonic excitation into a charge separation. In Ostreococcus tauri, this protein is Cytochrome b559 subunit beta.